Here is a 964-residue protein sequence, read N- to C-terminus: Translation initiation factor IF-2 (964 aa).

The segment covering 1-10 has biased composition (basic and acidic residues); that stretch reads MSDKTNDDKT. The disordered stretch occupies residues 1 to 379; it reads MSDKTNDDKT…SQMQETREKI (379 aa). Residues 27 to 37 are compositionally biased toward polar residues; sequence EQSTVRQNFSH. Residues 77–102 are compositionally biased toward low complexity; it reads APAASTPAPAQAAQPAQAAPVVRAPA. The segment covering 103 to 113 has biased composition (pro residues); it reads PATPAPKPAAP. Over residues 114–140 the composition is skewed to low complexity; that stretch reads AAPVTKPHVAQQRPAQQRPGGQQAQRP. Composition is skewed to basic and acidic residues over residues 156–227 and 234–243; these read SEMD…EAAK and ARTERRDDAR. The span at 250-278 shows a compositional bias: low complexity; the sequence is RPQQAGRPQGNRPPQGGRPQQGGPRPAAP. A compositionally biased stretch (basic and acidic residues) spans 323–338; it reads PEVRAPKVVKTEDDRR. Positions 462–629 constitute a tr-type G domain; sequence SRPPVVTIMG…AILLQAEILD (168 aa). The interval 471-478 is G1; the sequence is GHVDHGKT. 471 to 478 serves as a coordination point for GTP; that stretch reads GHVDHGKT. The interval 496 to 500 is G2; that stretch reads GITQH. Residues 517-520 form a G3 region; sequence DTPG. GTP contacts are provided by residues 517 to 521 and 571 to 574; these read DTPGH and NKID. The segment at 571 to 574 is G4; it reads NKID. Positions 607-609 are G5; it reads SAK.

Belongs to the TRAFAC class translation factor GTPase superfamily. Classic translation factor GTPase family. IF-2 subfamily.

Its subcellular location is the cytoplasm. Functionally, one of the essential components for the initiation of protein synthesis. Protects formylmethionyl-tRNA from spontaneous hydrolysis and promotes its binding to the 30S ribosomal subunits. Also involved in the hydrolysis of GTP during the formation of the 70S ribosomal complex. This chain is Translation initiation factor IF-2, found in Brucella anthropi (strain ATCC 49188 / DSM 6882 / CCUG 24695 / JCM 21032 / LMG 3331 / NBRC 15819 / NCTC 12168 / Alc 37) (Ochrobactrum anthropi).